A 546-amino-acid polypeptide reads, in one-letter code: Casein kinase I homolog 2 (546 aa).

Polar residues-rich tracts occupy residues 1-33 (MSQV…SNVR) and 44-55 (HVSSNLNHNTGN). The segment at 1-67 (MSQVQSPLTA…ASYSGSQSRD (67 aa)) is disordered. Residue S2 is modified to N-acetylserine. One can recognise a Protein kinase domain in the interval 76-360 (YKIGKKIGEG…ETADGQYDWM (285 aa)). ATP contacts are provided by residues 82–90 (IGEGSFGVL) and K105. D195 acts as the Proton acceptor in catalysis. 2 disordered regions span residues 373–425 (NKKP…QAQA) and 443–546 (QQAN…LGCC). A compositionally biased stretch (low complexity) spans 412–425 (QQQQQQQAQAQAQA). Positions 453–465 (DDSHYDEEREASK) are enriched in basic and acidic residues. The residue at position 455 (S455) is a Phosphoserine. K465 participates in a covalent cross-link: Glycyl lysine isopeptide (Lys-Gly) (interchain with G-Cter in ubiquitin). The segment covering 475-496 (QQQTQQKYAQQQQKQMQQKSKQ) has biased composition (low complexity). Residues 497-530 (FANTGANGQTNKYPYNAQPTANDEQNAKNAAQDR) are compositionally biased toward polar residues. Positions 533–546 (NKSSKGFFSKLGCC) are enriched in low complexity. Residues C545 and C546 are each lipidated (S-palmitoyl cysteine).

This sequence belongs to the protein kinase superfamily. CK1 Ser/Thr protein kinase family. Casein kinase I subfamily. Post-translationally, palmitoylated by AKR1, which is required for proper plasma membrane localization of YCK2.

It is found in the cell membrane. The catalysed reaction is L-seryl-[protein] + ATP = O-phospho-L-seryl-[protein] + ADP + H(+). It catalyses the reaction L-threonyl-[protein] + ATP = O-phospho-L-threonyl-[protein] + ADP + H(+). Functionally, casein kinases are operationally defined by their preferential utilization of acidic proteins such as caseins as substrates. The polypeptide is Casein kinase I homolog 2 (YCK2) (Saccharomyces cerevisiae (strain ATCC 204508 / S288c) (Baker's yeast)).